Reading from the N-terminus, the 364-residue chain is MYIKNVHLINFRNYDDMYLELSPNTNIFVGNNAQGKTNILESIYYSSIGKSHRTNKDKDLIKWDKNNTYLRTYVSRERLDKTIDINIFKNGKKAITVNKIKIKKISELMGNLNVVMFSPEDLRIIKDSPGNRRKFLDIELCKINNVYYHDLVQYNKILSERNTALKNWNNKINDIIDIYDEQLSKYGAFIIKERNKYLDKLNIIGKNIHKKITNDLEDINFRYLTNIKDFDNTEKELLIVLKKNRKKDLERNSTSIGPHRDDFEVSINNIDTRIFGSQGQQRTAVLTLKFASLEIIKNIIGEYPVLLLDDVLSELDSNRQKFVLNSIDKIQTIITCTGIEEIDKYLDKKQSQLYLVNNGKIKRV.

G30 to T37 contacts ATP.

Belongs to the RecF family.

The protein localises to the cytoplasm. Its function is as follows. The RecF protein is involved in DNA metabolism; it is required for DNA replication and normal SOS inducibility. RecF binds preferentially to single-stranded, linear DNA. It also seems to bind ATP. The sequence is that of DNA replication and repair protein RecF from Clostridium botulinum (strain Okra / Type B1).